A 518-amino-acid polypeptide reads, in one-letter code: Arrestin-related trafficking adapter 10 (518 aa).

Lys-118 is covalently cross-linked (Glycyl lysine isopeptide (Lys-Gly) (interchain with G-Cter in ubiquitin)).

This sequence belongs to the ART10 family. As to quaternary structure, interacts with RSP5. In terms of processing, ubiquitinated by RSP5.

The protein resides in the cytoplasm. Its function is as follows. May regulate endocytosis by recruiting RSP5 ubiquitin ligase activity to specific plasma membrane proteins in response to extracellular stimuli. The chain is Arrestin-related trafficking adapter 10 (ART10) from Saccharomyces cerevisiae (strain RM11-1a) (Baker's yeast).